The chain runs to 500 residues: L-arabinose isomerase (500 aa).

4 residues coordinate Mn(2+): Glu-306, Glu-333, His-350, and His-450.

Belongs to the arabinose isomerase family. In terms of assembly, homohexamer. Mn(2+) serves as cofactor.

The enzyme catalyses beta-L-arabinopyranose = L-ribulose. It functions in the pathway carbohydrate degradation; L-arabinose degradation via L-ribulose; D-xylulose 5-phosphate from L-arabinose (bacterial route): step 1/3. In terms of biological role, catalyzes the conversion of L-arabinose to L-ribulose. The protein is L-arabinose isomerase of Escherichia coli O7:K1 (strain IAI39 / ExPEC).